Consider the following 250-residue polypeptide: Menaquinol:cytochrome c reductase cytochrome c subunit (250 aa).

The next 3 helical transmembrane spans lie at 46-62 (WLVG…LTVA), 104-124 (VIGA…APFL), and 137-157 (VATG…WESV). Residues 178-250 (DTNAEGYKIA…LQKMANSSPA (73 aa)) enclose the Cytochrome c domain. Residues cysteine 192, cysteine 195, and histidine 196 each contribute to the heme c site. The tract at residues 229 to 250 (MPGGIFKGTDEELQKMANSSPA) is disordered.

The protein belongs to the cytochrome b family. In terms of assembly, the main subunits of the menaquinol:cytochrome c complex are a Rieske-type iron-sulfur protein (QcrA), a cytochrome b (QcrB) and a cytochrome c (QcrC). The cofactor is heme c.

The protein resides in the cell membrane. Component of the menaquinol:cytochrome c reductase complex. The sequence is that of Menaquinol:cytochrome c reductase cytochrome c subunit (qcrC) from Geobacillus thermodenitrificans.